The primary structure comprises 483 residues: Altronate oxidoreductase (483 aa).

18 to 29 (IIQFGEGNFLRA) is an NAD(+) binding site.

This sequence belongs to the mannitol dehydrogenase family. UxaB subfamily.

The enzyme catalyses D-altronate + NAD(+) = keto-D-tagaturonate + NADH + H(+). It participates in carbohydrate metabolism; pentose and glucuronate interconversion. This chain is Altronate oxidoreductase, found in Escherichia coli O17:K52:H18 (strain UMN026 / ExPEC).